A 419-amino-acid polypeptide reads, in one-letter code: UDP-N-acetylmuramoylalanine--D-glutamate ligase (419 aa).

109–115 (GSAGKTT) is a binding site for ATP.

The protein belongs to the MurCDEF family.

It is found in the cytoplasm. It carries out the reaction UDP-N-acetyl-alpha-D-muramoyl-L-alanine + D-glutamate + ATP = UDP-N-acetyl-alpha-D-muramoyl-L-alanyl-D-glutamate + ADP + phosphate + H(+). Its pathway is cell wall biogenesis; peptidoglycan biosynthesis. Its function is as follows. Cell wall formation. Catalyzes the addition of glutamate to the nucleotide precursor UDP-N-acetylmuramoyl-L-alanine (UMA). This Chlamydia caviae (strain ATCC VR-813 / DSM 19441 / 03DC25 / GPIC) (Chlamydophila caviae) protein is UDP-N-acetylmuramoylalanine--D-glutamate ligase.